The following is a 306-amino-acid chain: Mycothiol acetyltransferase (306 aa).

N-acetyltransferase domains are found at residues 5–157 (EIYE…EPAA) and 159–306 (ITIR…HKKL). Glu-36 contacts 1D-myo-inositol 2-(L-cysteinylamino)-2-deoxy-alpha-D-glucopyranoside. 82 to 84 (MLV) is an acetyl-CoA binding site. 1D-myo-inositol 2-(L-cysteinylamino)-2-deoxy-alpha-D-glucopyranoside-binding residues include Asp-186, Lys-227, and Glu-238. 242 to 244 (LGV) provides a ligand contact to acetyl-CoA. Position 276 (Tyr-276) interacts with 1D-myo-inositol 2-(L-cysteinylamino)-2-deoxy-alpha-D-glucopyranoside. 281–286 (NVRAVR) contacts acetyl-CoA.

It belongs to the acetyltransferase family. MshD subfamily. Monomer.

It carries out the reaction 1D-myo-inositol 2-(L-cysteinylamino)-2-deoxy-alpha-D-glucopyranoside + acetyl-CoA = mycothiol + CoA + H(+). Catalyzes the transfer of acetyl from acetyl-CoA to desacetylmycothiol (Cys-GlcN-Ins) to form mycothiol. In Stackebrandtia nassauensis (strain DSM 44728 / CIP 108903 / NRRL B-16338 / NBRC 102104 / LLR-40K-21), this protein is Mycothiol acetyltransferase.